We begin with the raw amino-acid sequence, 132 residues long: Ribosome-binding factor A (132 aa).

The protein belongs to the RbfA family. As to quaternary structure, monomer. Binds 30S ribosomal subunits, but not 50S ribosomal subunits or 70S ribosomes.

It localises to the cytoplasm. One of several proteins that assist in the late maturation steps of the functional core of the 30S ribosomal subunit. Associates with free 30S ribosomal subunits (but not with 30S subunits that are part of 70S ribosomes or polysomes). Required for efficient processing of 16S rRNA. May interact with the 5'-terminal helix region of 16S rRNA. In Bordetella avium (strain 197N), this protein is Ribosome-binding factor A.